Reading from the N-terminus, the 894-residue chain is Exocyst complex component 1 (894 aa).

Coiled coils occupy residues 152-199 (GDEE…LQVL) and 205-259 (QSIM…NHLI). Positions 437-495 (SKESKKFATLPRKESAVKQETESLHGSSGKLTGSTSSLNKLSVQSSGSRRSQSSSLLDM) are disordered. Residues 438 to 459 (KESKKFATLPRKESAVKQETES) show a composition bias toward basic and acidic residues. Residues 460–491 (LHGSSGKLTGSTSSLNKLSVQSSGSRRSQSSS) show a composition bias toward low complexity. Ser-470 carries the phosphoserine modification. At Thr-471 the chain carries Phosphothreonine. Phosphoserine occurs at positions 473, 487, and 501.

The protein belongs to the SEC3 family. As to quaternary structure, the exocyst complex is composed of EXOC1, EXOC2, EXOC3, EXOC4, EXOC5, EXOC6, EXOC7 and EXOC8. Interacts with EEF1A1. Interacts with SLC6A9; interaction increases the transporter capacity of SLC6A9 probably by promoting its insertion into the cell membrane.

It localises to the midbody. It is found in the midbody ring. The protein resides in the cytoplasm. Its subcellular location is the perinuclear region. The protein localises to the cell membrane. Component of the exocyst complex involved in the docking of exocytic vesicles with fusion sites on the plasma membrane. In Mus musculus (Mouse), this protein is Exocyst complex component 1 (Exoc1).